A 508-amino-acid chain; its full sequence is UDP-N-acetylmuramyl-tripeptide synthetase (508 aa).

Ser-35 contributes to the UDP-N-acetyl-alpha-D-muramoyl-L-alanyl-D-glutamate binding site. 118-124 (GTDGKSS) contributes to the ATP binding site. Residues 163-164 (ST), Thr-190, and Arg-200 contribute to the UDP-N-acetyl-alpha-D-muramoyl-L-alanyl-D-glutamate site. Lys-232 bears the N6-carboxylysine mark.

It belongs to the MurCDEF family. MurE subfamily. Carboxylation is probably crucial for Mg(2+) binding and, consequently, for the gamma-phosphate positioning of ATP.

It localises to the cytoplasm. The protein operates within cell wall biogenesis; peptidoglycan biosynthesis. Catalyzes the addition of an amino acid to the nucleotide precursor UDP-N-acetylmuramoyl-L-alanyl-D-glutamate (UMAG) in the biosynthesis of bacterial cell-wall peptidoglycan. In Borrelia garinii subsp. bavariensis (strain ATCC BAA-2496 / DSM 23469 / PBi) (Borreliella bavariensis), this protein is UDP-N-acetylmuramyl-tripeptide synthetase.